A 398-amino-acid chain; its full sequence is DJ-1 protein homolog E (398 aa).

PfpI endopeptidase domains lie at 7 to 199 (KSAL…ESLG) and 210 to 393 (ASVL…TALG).

It belongs to the peptidase C56 family. Homotrimer. As to expression, expressed in roots and cauline leaves.

Functionally, may be involved in oxidative stress response. This Arabidopsis thaliana (Mouse-ear cress) protein is DJ-1 protein homolog E (DJ1E).